The chain runs to 457 residues: Probable cytosolic Fe-S cluster assembly factor oxy-4 (457 aa).

A [4Fe-4S] cluster-binding site is contributed by Cys25. The tract at residues 38-59 is disordered; the sequence is KEESQVNIRTKKPKDKESSKTE. [4Fe-4S] cluster contacts are provided by Cys71, Cys74, Cys77, Cys176, Cys232, Cys380, and Cys384.

This sequence belongs to the NARF family.

Its function is as follows. Component of the cytosolic iron-sulfur (Fe/S) protein assembly machinery. Required for maturation of extramitochondrial Fe/S proteins. The protein is Probable cytosolic Fe-S cluster assembly factor oxy-4 (oxy-4) of Caenorhabditis elegans.